The sequence spans 277 residues: Diaminopimelate epimerase (277 aa).

Asparagine 11 and asparagine 72 together coordinate substrate. The active-site Proton donor is the cysteine 81. Substrate contacts are provided by residues 82–83 (GN), asparagine 189, and 207–208 (ER). Cysteine 217 acts as the Proton acceptor in catalysis. 218–219 (GT) is a substrate binding site.

Belongs to the diaminopimelate epimerase family. As to quaternary structure, homodimer.

It is found in the cytoplasm. It carries out the reaction (2S,6S)-2,6-diaminopimelate = meso-2,6-diaminopimelate. Its pathway is amino-acid biosynthesis; L-lysine biosynthesis via DAP pathway; DL-2,6-diaminopimelate from LL-2,6-diaminopimelate: step 1/1. Catalyzes the stereoinversion of LL-2,6-diaminopimelate (L,L-DAP) to meso-diaminopimelate (meso-DAP), a precursor of L-lysine and an essential component of the bacterial peptidoglycan. In Hydrogenobaculum sp. (strain Y04AAS1), this protein is Diaminopimelate epimerase.